Consider the following 507-residue polypeptide: Phosphoprotein (507 aa).

The segment at 1-48 is interaction with N0; the sequence is MAEEQARHVKNGLECIRALKAEPIGSLAIGEAMAAWSEISDNPGQEQA. Disordered stretches follow at residues 40-98, 134-174, 201-231, and 251-305; these read SDNP…FPSR, GLDG…APIS, NNFP…IKKG, and ATQC…KGGD. Ser86 is subject to Phosphoserine. A compositionally biased stretch (low complexity) spans 134–145; it reads GLDGDSTLSGGD. A compositionally biased stretch (acidic residues) spans 146–160; the sequence is NESENSDVDIGEPDT. Ser151 bears the Phosphoserine mark. The span at 260-270 shows a compositional bias: low complexity; sequence SEPSGPGAPAG. Positions 279–300 are enriched in polar residues; the sequence is AALTQEWTPESGTTISPRSQNK. The multimerization stretch occupies residues 304–376; the sequence is GDYYDDELFS…LSSIMIAIPG (73 aa). 2 interaction with the L polymerase regions span residues 361 to 377 and 396 to 410; these read STLE…IPGL and PIIG…AEVL. The segment at 457-507 is x domain (XD); sequence GPASRSVIRSIIKSSRIEEDRKRYLMTLLDDIKGANDLAKFHQMLMKIIMK. Residues 459–507 form an interaction with the nucleocapsid (N-RNA) region; it reads ASRSVIRSIIKSSRIEEDRKRYLMTLLDDIKGANDLAKFHQMLMKIIMK.

The protein belongs to the morbillivirus P protein family. Homotetramer. Interacts (via multimerization domain and XD domain) with polymerase L; this interaction forms the polymerase L-P complex. Interacts (via N-terminus) with N0 (via Ncore); this interaction allows P to chaperon N0 to avoid N polymerization and non-specific RNA binding before encapsidation. Interacts (via C-terminus) with N-RNA template (via Ntail); this interaction maintains the P/L complex anchored to the nucleocapsid template during the sequential transcription. Interacts (via C-terminus) with protein C this interaction allows C to associate with the ribonucleocapsid. Post-translationally, phosphorylation on serines by host CK2 is necessary for the formation of viral factories.

Functionally, essential cofactor of the RNA polymerase L that plays a central role in the transcription and replication by forming the polymerase complex with RNA polymerase L and recruiting L to the genomic N-RNA template for RNA synthesis. Also plays a central role in the encapsidation of nascent RNA chains by forming the encapsidation complex with the nucleocapsid protein N (N-P complex). Acts as a chaperone for newly synthesized free N protein, so-called N0, allowing encapsidation of nascent RNA chains during replication. The nucleoprotein protein N prevents excessive phosphorylation of P, which leads to down-regulation of viral transcription/ replication. Participates, together with N, in the formation of viral factories (viroplasms), which are large inclusions in the host cytoplasm where replication takes place. The chain is Phosphoprotein (P/V) from Homo sapiens (Human).